The chain runs to 136 residues: Replication enhancer (136 aa).

It belongs to the geminiviridae replication enhancer protein family. In terms of assembly, homooligomer. Interacts with the replication-associated protein (REP). Interacts with host proliferating cell nuclear antigen (PCNA). Interacts with host retinoblastoma-related protein 1 (RBR1), and may thereby deregulate the host cell cycle. Oligomerization and interaction with PCNA are necessary for optimal replication enhancement.

Functionally, increases viral DNA accumulation. Enhances infectivity and symptom expression. In Beet curly top virus (strain California/Logan) (BCTV), this protein is Replication enhancer.